Reading from the N-terminus, the 511-residue chain is 2,3-bisphosphoglycerate-independent phosphoglycerate mutase (511 aa).

Asp14 and Ser64 together coordinate Mn(2+). Ser64 serves as the catalytic Phosphoserine intermediate. Residues His125, 155 to 156 (RD), Arg187, Arg193, 259 to 262 (RADR), and Lys333 each bind substrate. Asp400, His404, Asp441, His442, and His460 together coordinate Mn(2+).

This sequence belongs to the BPG-independent phosphoglycerate mutase family. In terms of assembly, monomer. Requires Mn(2+) as cofactor.

It carries out the reaction (2R)-2-phosphoglycerate = (2R)-3-phosphoglycerate. It participates in carbohydrate degradation; glycolysis; pyruvate from D-glyceraldehyde 3-phosphate: step 3/5. Its function is as follows. Catalyzes the interconversion of 2-phosphoglycerate and 3-phosphoglycerate. This is 2,3-bisphosphoglycerate-independent phosphoglycerate mutase from Idiomarina loihiensis (strain ATCC BAA-735 / DSM 15497 / L2-TR).